Here is a 335-residue protein sequence, read N- to C-terminus: Cytoplasmic envelopment protein 2 (335 aa).

Belongs to the herpesviridae cytoplasmic envelopment protein 2 family. As to quaternary structure, interacts with cytoplasmic envelopment protein 3 and with the capsid.

It is found in the virion tegument. The protein localises to the host cytoplasm. The protein resides in the host nucleus. In terms of biological role, plays a critical role in cytoplasmic virus egress. Participates in the final step of tegumentation and envelope acquisition within the host cytoplasm by directly interacting with the capsid. Upon virion binding to target cell, a signaling cascade is triggered to disrupt the interaction with the capsid, thereby preparing capsid uncoating. The protein is Cytoplasmic envelopment protein 2 (33) of Connochaetes taurinus (Blue wildebeest).